The sequence spans 123 residues: Large ribosomal subunit protein bL12 (123 aa).

The protein belongs to the bacterial ribosomal protein bL12 family. As to quaternary structure, homodimer. Part of the ribosomal stalk of the 50S ribosomal subunit. Forms a multimeric L10(L12)X complex, where L10 forms an elongated spine to which 2 to 4 L12 dimers bind in a sequential fashion. Binds GTP-bound translation factors.

Its function is as follows. Forms part of the ribosomal stalk which helps the ribosome interact with GTP-bound translation factors. Is thus essential for accurate translation. The chain is Large ribosomal subunit protein bL12 from Metamycoplasma arthritidis (strain 158L3-1) (Mycoplasma arthritidis).